Here is a 301-residue protein sequence, read N- to C-terminus: MEKETKSLAWPATAEFYGWVFIFSSIQLCTVVFLTVRFNGFKVGREYAVFTFAGMSFNCFLLPIKMGLLSGHWTLPRDFCAILLYIDDFSAYFSSWSLVFMAIERINYFCYSTPLLNENSKALAKVCFPIVWVVSGVQALQMLNNYKATALQNETGQCFLAFLRSGHDMWLMLVYSVVIPVMLVFFYLYSKNFMLLKDELSSVTTYLCIYLLLGTIAHLPKAALSEIESDKIFYGLRDIFMALPVLKVYYISAMAYCMACDDHTVPVRLCSIWLVNLCKKCFSCTRREKGSDLEVGIKMLK.

Topologically, residues 1-15 are extracellular; the sequence is MEKETKSLAWPATAE. The chain crosses the membrane as a helical span at residues 16–36; the sequence is FYGWVFIFSSIQLCTVVFLTV. Over 37–48 the chain is Cytoplasmic; the sequence is RFNGFKVGREYA. Residues 49–69 traverse the membrane as a helical segment; that stretch reads VFTFAGMSFNCFLLPIKMGLL. The Extracellular segment spans residues 70 to 82; it reads SGHWTLPRDFCAI. Residues 83 to 103 form a helical membrane-spanning segment; that stretch reads LLYIDDFSAYFSSWSLVFMAI. At 104–122 the chain is on the cytoplasmic side; the sequence is ERINYFCYSTPLLNENSKA. Residues 123–143 traverse the membrane as a helical segment; the sequence is LAKVCFPIVWVVSGVQALQML. Residues 144–168 lie on the Extracellular side of the membrane; the sequence is NNYKATALQNETGQCFLAFLRSGHD. Residue Asn-153 is glycosylated (N-linked (GlcNAc...) asparagine; by host). A helical transmembrane segment spans residues 169-189; sequence MWLMLVYSVVIPVMLVFFYLY. The Cytoplasmic portion of the chain corresponds to 190–199; it reads SKNFMLLKDE. Residues 200–220 traverse the membrane as a helical segment; that stretch reads LSSVTTYLCIYLLLGTIAHLP. Residues 221–238 are Extracellular-facing; the sequence is KAALSEIESDKIFYGLRD. Residues 239–259 traverse the membrane as a helical segment; sequence IFMALPVLKVYYISAMAYCMA. The Cytoplasmic segment spans residues 260 to 301; the sequence is CDDHTVPVRLCSIWLVNLCKKCFSCTRREKGSDLEVGIKMLK.

The protein belongs to the G-protein coupled receptor 1 family.

It localises to the host cell membrane. The sequence is that of G-protein coupled receptor homolog U51 (U51) from Homo sapiens (Human).